The chain runs to 318 residues: Transaldolase (318 aa).

The active-site Schiff-base intermediate with substrate is the K132.

The protein belongs to the transaldolase family. Type 1 subfamily. Homodimer.

The protein resides in the cytoplasm. The catalysed reaction is D-sedoheptulose 7-phosphate + D-glyceraldehyde 3-phosphate = D-erythrose 4-phosphate + beta-D-fructose 6-phosphate. The protein operates within carbohydrate degradation; pentose phosphate pathway; D-glyceraldehyde 3-phosphate and beta-D-fructose 6-phosphate from D-ribose 5-phosphate and D-xylulose 5-phosphate (non-oxidative stage): step 2/3. Functionally, transaldolase is important for the balance of metabolites in the pentose-phosphate pathway. In Shewanella sp. (strain ANA-3), this protein is Transaldolase.